The chain runs to 437 residues: UDP-glucosyl transferase 79L3 (437 aa).

Residue His-18 is the Proton acceptor of the active site. The Charge relay role is filled by Asp-117. UDP-binding residues include Ser-254, Trp-312, Val-313, His-330, Ser-335, and Glu-338.

Belongs to the UDP-glycosyltransferase family. In terms of tissue distribution, mainly expressed in flowers, flower buds and young leaves, and, to a lesser extent, in old leaves, stems and roots.

Its pathway is secondary metabolite biosynthesis; terpenoid biosynthesis. In terms of biological role, component of the oleanane-type triterpene saponins (e.g. saponarioside A and saponarioside B) biosynthetic pathway, leading to the production of natural products with detergent properties used as traditional sources of soap. A glycosyltransferase that mediates the conversion of QA-triFR to QA-triFRX via the elongation of the C-28 sugar chain with a D-xylose. This is UDP-glucosyl transferase 79L3 from Saponaria officinalis (Common soapwort).